The primary structure comprises 41 residues: Photosystem I reaction center subunit IX (41 aa).

Residues 7–27 form a helical membrane-spanning segment; it reads YLSTAPVLLTLWMTFTAGFII.

Belongs to the PsaJ family.

Its subcellular location is the plastid. The protein resides in the chloroplast thylakoid membrane. In terms of biological role, may help in the organization of the PsaE and PsaF subunits. In Thalassiosira pseudonana (Marine diatom), this protein is Photosystem I reaction center subunit IX.